A 322-amino-acid chain; its full sequence is MSAVPHDSPAHPPVVCLLGPTASGKTAAALALAADAPVEIISLDSALVYREMDIGTAKPTREELAVAPHHLIDIIDPADSYSAAQFVADAERLIGEIHARGHVPLIVGGTMLYYKALTQGLNDLPQADAALRAELDQLAAERGWPALHAMLAEVDPVTAARLAPNDAQRIQRALEIHRLSGQPMSALLARQAEGRTFAGAADQRYRVIALEPSDRLALHHRIARRYDAMLAQGFIDEVERLRARGDLHPGLPSIRCVGYRQVWEYLDGEADFATMRERGIAATRQLCKRQLTWLRSTPERRVVDCLATDYVDQVRRLADFGH.

19-26 provides a ligand contact to ATP; sequence GPTASGKT. 21–26 serves as a coordination point for substrate; sequence TASGKT. Interaction with substrate tRNA regions lie at residues 44 to 47, 168 to 172, and 255 to 260; these read DSAL, QRIQR, and RCVGYR.

This sequence belongs to the IPP transferase family. As to quaternary structure, monomer. Mg(2+) is required as a cofactor.

It carries out the reaction adenosine(37) in tRNA + dimethylallyl diphosphate = N(6)-dimethylallyladenosine(37) in tRNA + diphosphate. In terms of biological role, catalyzes the transfer of a dimethylallyl group onto the adenine at position 37 in tRNAs that read codons beginning with uridine, leading to the formation of N6-(dimethylallyl)adenosine (i(6)A). This chain is tRNA dimethylallyltransferase, found in Cupriavidus taiwanensis (strain DSM 17343 / BCRC 17206 / CCUG 44338 / CIP 107171 / LMG 19424 / R1) (Ralstonia taiwanensis (strain LMG 19424)).